A 242-amino-acid polypeptide reads, in one-letter code: Probable septum site-determining protein MinC (242 aa).

It belongs to the MinC family. In terms of assembly, interacts with MinD and FtsZ.

In terms of biological role, cell division inhibitor that blocks the formation of polar Z ring septums. Rapidly oscillates between the poles of the cell to destabilize FtsZ filaments that have formed before they mature into polar Z rings. Prevents FtsZ polymerization. This chain is Probable septum site-determining protein MinC, found in Brucella anthropi (strain ATCC 49188 / DSM 6882 / CCUG 24695 / JCM 21032 / LMG 3331 / NBRC 15819 / NCTC 12168 / Alc 37) (Ochrobactrum anthropi).